The following is an 84-amino-acid chain: U8-theraphotoxin-Hhn1c 3 (84 aa).

The signal sequence occupies residues 1–21 (MKVALIVCLVWVMAMMELVSC). Cystine bridges form between C23–C35, C29–C44, C34–C67, C54–C75, and C69–C81.

It belongs to the AVIT (prokineticin) family. Expressed by the venom gland.

The protein localises to the secreted. This is U8-theraphotoxin-Hhn1c 3 from Cyriopagopus hainanus (Chinese bird spider).